A 663-amino-acid chain; its full sequence is MDRKAELERKKAKLAALREEKDRRRREKEIKDMEEAAGRIGGGAGIDKDQRKDLDEMLSSLGVAPVSEVLSSLSSVNSMTSDNSNTQTPDASLQATVNGQSGGKKQPLNLSVYNVQATNIPPKETLVYTKQTQTTSTGGGNGDVLSCHSSPLSGYMEDWWRPRKAHATDYYDEYNLNPGLEWEDEFTDDEESSLQNLGNGFTSKLPPGYLTHGLPTVKDVAPAITPLEIKKETEVKKEVNELSEEQKQMIILSENFQRFVVRAGRVIERALSENVDIYTDYIGGGDSEEANDERSHARLSLNRVFYDERWSKNRCITSMDWSTHFPELVVGSYHNNEESPNEPDGVVMVWNTKFKKSTPEDVFHCQSAVMSTCFAKFNPNLILGGTYSGQIVLWDNRVQKRTPIQRTPLSAAAHTHPVYCLQMVGTQNAHNVISISSDGKLCSWSLDMLSQPQDTLELQQRQSKAIAITSMAFPANEINSLVMGSEDGYVYSASRHGLRSGVNEVYERHLGPITGISTHYNQLSPDFGHLFLTSSIDWTIKLWSLKDTKPLYSFEDNSDYVMDVAWSPVHPALFAAVDGSGRLDLWNLNQDTEVPTASIVVAGAPALNRVSWTPSGLHVCIGDEAGKLYVYDVAENLAQPSRDEWSRFNTHLSEIKMNQSDEV.

Residues 17-37 show a composition bias toward basic and acidic residues; it reads LREEKDRRRREKEIKDMEEAA. 2 disordered regions span residues 17-52 and 75-107; these read LREE…DQRK and SVNS…KKQP. Over residues 75–85 the composition is skewed to low complexity; the sequence is SVNSMTSDNSN. Residues 86–99 are compositionally biased toward polar residues; that stretch reads TQTPDASLQATVNG. WD repeat units follow at residues 311–360, 364–404, 413–454, 463–503, 508–553, 556–596, and 602–641; these read SKNR…STPE, HCQS…RTPI, AHTH…QPQD, SKAI…SGVN, RHLG…PLYS, DNSD…EVPT, and AGAP…AQPS.

This sequence belongs to the dynein intermediate chain family. As to quaternary structure, homodimer. The cytoplasmic dynein 1 complex consists of two catalytic heavy chains (HCs) and a number of non-catalytic subunits presented by intermediate chains (ICs), light intermediate chains (LICs) and light chains (LCs). High levels of isoform 1b, isoform 1c, isoform 3a and isoform 4 accumulate in early egg chambers and at stage 9 become concentrated at the posterior of the oocyte. Isoform 5a and isoform 5b are highly expressed in adult head and to a lesser extent in adult torso. Isoform 1a, isoform 2a and isoform 2b are found in all tissues examined, including ovaries, midgut, torso and head.

It is found in the cytoplasm. The protein localises to the cytoskeleton. The protein resides in the lysosome membrane. It localises to the nucleus membrane. Acts as one of several non-catalytic accessory components of the cytoplasmic dynein 1 complex that are thought to be involved in linking dynein to cargos and to adapter proteins that regulate dynein function. Cytoplasmic dynein 1 acts as a motor for the intracellular retrograde motility of vesicles and organelles along microtubules. The intermediate chains mediate the help dynein bind to dynactin 150 kDa component. This is Cytoplasmic dynein 1 intermediate chain (sw) from Drosophila melanogaster (Fruit fly).